A 133-amino-acid chain; its full sequence is Protein PsiE homolog (133 aa).

Transmembrane regions (helical) follow at residues 13–33 (LQWI…IFLI), 55–75 (VESI…IKYF), 81–101 (FPLR…IIVS), and 105–125 (PMET…LYIS).

This sequence belongs to the PsiE family.

It is found in the cell membrane. The polypeptide is Protein PsiE homolog (Bacillus cereus (strain ATCC 10987 / NRS 248)).